The following is an 81-amino-acid chain: Sec-independent protein translocase protein TatA (81 aa).

The helical transmembrane segment at 1-21 (MGGLQPWHWVIVIAVFVLLFG) threads the bilayer. Over residues 46 to 56 (MQAESKGDEPK) the composition is skewed to basic and acidic residues. The segment at 46-81 (MQAESKGDEPKPATPIASERVDTTAPEQQSTDRHTA) is disordered.

The protein belongs to the TatA/E family. The Tat system comprises two distinct complexes: a TatABC complex, containing multiple copies of TatA, TatB and TatC subunits, and a separate TatA complex, containing only TatA subunits. Substrates initially bind to the TatABC complex, which probably triggers association of the separate TatA complex to form the active translocon.

It is found in the cell membrane. Part of the twin-arginine translocation (Tat) system that transports large folded proteins containing a characteristic twin-arginine motif in their signal peptide across membranes. TatA could form the protein-conducting channel of the Tat system. The protein is Sec-independent protein translocase protein TatA of Mycolicibacterium smegmatis (strain ATCC 700084 / mc(2)155) (Mycobacterium smegmatis).